An 854-amino-acid polypeptide reads, in one-letter code: Protein translocase subunit SecA (854 aa).

Residues Q81, 99 to 103, and D487 contribute to the ATP site; that span reads GEGKT.

This sequence belongs to the SecA family. As to quaternary structure, monomer and homodimer. Part of the essential Sec protein translocation apparatus which comprises SecA, SecYEG and auxiliary proteins SecDF. Other proteins may also be involved.

The protein resides in the cell membrane. It localises to the cytoplasm. It carries out the reaction ATP + H2O + cellular proteinSide 1 = ADP + phosphate + cellular proteinSide 2.. Part of the Sec protein translocase complex. Interacts with the SecYEG preprotein conducting channel. Has a central role in coupling the hydrolysis of ATP to the transfer of proteins into and across the cell membrane, serving as an ATP-driven molecular motor driving the stepwise translocation of polypeptide chains across the membrane. The sequence is that of Protein translocase subunit SecA from Mycoplasma mobile (strain ATCC 43663 / 163K / NCTC 11711) (Mesomycoplasma mobile).